A 692-amino-acid polypeptide reads, in one-letter code: Putative ESX-1 scaffolding and assembly protein SaeA (692 aa).

Over residues 1-21 (MGERGELVSDLHPSDDHDADP) the composition is skewed to basic and acidic residues. Disordered regions lie at residues 1–23 (MGER…DPRL) and 87–134 (PAAP…TTGF). The segment covering 89-107 (APEPDPPPVPEPQPEPEPG) has biased composition (pro residues).

Functionally, may be involved in assembly of the ESX-1 / type VII specialized secretion system (T7SS), which exports several proteins including EsxA and EsxB. Involved in DNA conjugation in recipient (MKD8) but not donor (mc(2)155) strain. This Mycolicibacterium smegmatis (strain MKD8) (Mycobacterium smegmatis) protein is Putative ESX-1 scaffolding and assembly protein SaeA (saeA).